We begin with the raw amino-acid sequence, 490 residues long: Cytochrome P450 71D11 (490 aa).

Cys-427 provides a ligand contact to heme.

Belongs to the cytochrome P450 family. Heme is required as a cofactor.

The chain is Cytochrome P450 71D11 (CYP71D11) from Lotus japonicus (Lotus corniculatus var. japonicus).